We begin with the raw amino-acid sequence, 503 residues long: Maturase K (503 aa).

Belongs to the intron maturase 2 family. MatK subfamily.

The protein localises to the plastid. Its subcellular location is the chloroplast. Its function is as follows. Usually encoded in the trnK tRNA gene intron. Probably assists in splicing its own and other chloroplast group II introns. In Rosa foetida (Austrian briar), this protein is Maturase K.